A 931-amino-acid polypeptide reads, in one-letter code: Beta-mannosidase A (931 aa).

The N-terminal stretch at 1-21 (MRHSIGLAAALLAPTLPVALG) is a signal peptide. Asn-40, Asn-79, Asn-247, Asn-282, and Asn-347 each carry an N-linked (GlcNAc...) asparagine glycan. Glu-479 acts as the Proton donor in catalysis. N-linked (GlcNAc...) asparagine glycosylation is found at Asn-550, Asn-608, Asn-658, Asn-738, Asn-790, Asn-798, Asn-830, and Asn-918.

Belongs to the glycosyl hydrolase 2 family. Beta-mannosidase A subfamily. As to quaternary structure, homodimer. In terms of processing, N-glycosylated.

It localises to the secreted. The catalysed reaction is Hydrolysis of terminal, non-reducing beta-D-mannose residues in beta-D-mannosides.. Its pathway is glycan metabolism; N-glycan degradation. In terms of biological role, exoglycosidase that cleaves the single beta-linked mannose residue from the non-reducing end of beta-mannosidic oligosaccharides of various complexity and length. Involved in the degradation of polymeric mannan and galactomannan. Releases the terminal mannose residue from mannobiose and mannotriose, as well as from galactosyl-mannobiose (GM2), galactosyl-mannotriose (GM3) and di-galactosyl-mannopentaose (G2M5). This is Beta-mannosidase A (mndA) from Aspergillus niger.